A 114-amino-acid polypeptide reads, in one-letter code: Protachykinin (114 aa).

The signal sequence occupies residues 1–19 (MKFLLPSIVIFLVLCQVFG). Residues 20-55 (EELGPKEDLDYWTGSNQVQDEWLQADPFREIIRRMT) constitute a propeptide that is removed on maturation. Methionine amide is present on residues Met-67 and Met-91.

Belongs to the tachykinin family. In terms of tissue distribution, expressed in all parts of the brain, with robust expression in the olfactory bulbs and tracts, moderate expression in the hypothalamus and posterior brain, and weak expression in the telencephalon-preoptic region and optic tectum-thalamus. Also expressed in nerve fibers, intestine, testes and pituitary gland. Not expressed in the liver or kidneys.

The protein resides in the secreted. Its function is as follows. Tachykinins are active peptides which excite neurons, evoke behavioral responses, are potent vasodilators and secretagogues, and contract (directly or indirectly) many smooth muscles. In terms of biological role, substance P produces a voltage-dependent inhibition of calcium current in retinal bipolar cells. It can enhance learning and memory, may regulate social approach and feeding behaviors, and can accelerate the functional recovery in postural balance in response to light after unilateral labyrinthectomy. The sequence is that of Protachykinin from Carassius auratus (Goldfish).